Reading from the N-terminus, the 473-residue chain is MTKGRVIQVMGPVVDVKFENGHLPAIYNALKIQHKARNENEVDIDLTLEVALHLGDDTVRTIAMASTDGLIRGMEVIDTGAPISVPVGEVTLGRVFNVLGEPIDMQGEIPDDARRDPIHRPAPKFEELATEVEILETGIKVVDLLAPYIKGGKIGLFGGAGVGKTVLIQELIHNIAQEHGGISVFAGVGERTREGNDLYHEMKDSGVISKTAMVFGQMNEPPGARMRVALTGLTMAEYFRDEQGQDVLLFIDNIFRFTQAGSEVSALLGRMPSAVGYQPTLATEMGQLQERITSTATGSITSIQAIYVPADDYTDPAPATTFSHLDATTNLERKLAEMGIYPAVDPLASTSRALAPEIVGEEHYQVARKVQQTLQRYRELQDIIAILGMDELSDEDKLIVHRARRIQFFLSQNFHVAEQFTGQPGSYVPIKETVRGFKEILEGKYDHIPEDAFRLVGRIEEVVEKAKQMGVEV.

Gly158 to Thr165 lines the ATP pocket.

Belongs to the ATPase alpha/beta chains family. F-type ATPases have 2 components, CF(1) - the catalytic core - and CF(0) - the membrane proton channel. CF(1) has five subunits: alpha(3), beta(3), gamma(1), delta(1), epsilon(1). CF(0) has three main subunits: a(1), b(2) and c(9-12). The alpha and beta chains form an alternating ring which encloses part of the gamma chain. CF(1) is attached to CF(0) by a central stalk formed by the gamma and epsilon chains, while a peripheral stalk is formed by the delta and b chains.

The protein resides in the cell membrane. It catalyses the reaction ATP + H2O + 4 H(+)(in) = ADP + phosphate + 5 H(+)(out). Functionally, produces ATP from ADP in the presence of a proton gradient across the membrane. The catalytic sites are hosted primarily by the beta subunits. The polypeptide is ATP synthase subunit beta (Geobacillus sp. (strain WCH70)).